The sequence spans 152 residues: Ribonuclease pancreatic gamma-type (152 aa).

A signal peptide spans 1–25 (MGLEKSFILFSLLVLVLGCVQPSLV). Residues 26 to 48 (GESKESPSEKFKRRHMDEEGPYQ) form a disordered region. The segment covering 27–43 (ESKESPSEKFKRRHMDE) has biased composition (basic and acidic residues). Positions 35 and 38 each coordinate substrate. Histidine 40 functions as the Proton acceptor in the catalytic mechanism. Disulfide bonds link cysteine 54-cysteine 112, cysteine 68-cysteine 123, cysteine 86-cysteine 138, and cysteine 93-cysteine 100. Substrate contacts are provided by residues 69–73 (KPLNT) and lysine 94. The active-site Proton donor is histidine 147.

This sequence belongs to the pancreatic ribonuclease family. In terms of assembly, monomer.

Its subcellular location is the secreted. The catalysed reaction is an [RNA] containing cytidine + H2O = an [RNA]-3'-cytidine-3'-phosphate + a 5'-hydroxy-ribonucleotide-3'-[RNA].. It carries out the reaction an [RNA] containing uridine + H2O = an [RNA]-3'-uridine-3'-phosphate + a 5'-hydroxy-ribonucleotide-3'-[RNA].. In terms of biological role, endonuclease that catalyzes the cleavage of RNA on the 3' side of pyrimidine nucleotides. Acts on single-stranded and double-stranded RNA. The sequence is that of Ribonuclease pancreatic gamma-type from Rattus fuscipes (Bush rat).